The sequence spans 186 residues: MLHFIKSASNSQSWYNHDKVEICFIGRSNVGKSSLINSLSNSAVSKVSNTPGRTQLINFFEDDQKNVYVDLPGYGFAQMPKDKLEKMHQMIDEYLQNRKNLKTIVLLFDSRRGILDQDLDFINWAQQAKKNIILLATKIDKLNQAQKHKLLVSLKELNLEKSVLLVSSLKRTNIDNLKKLLASEFK.

An EngB-type G domain is found at 18-186 (DKVEICFIGR…LKKLLASEFK (169 aa)). Residues 26–33 (GRSNVGKS), 52–56 (GRTQL), 70–73 (DLPG), 137–140 (TKID), and 166–168 (VSS) each bind GTP. Residues Ser33 and Thr54 each coordinate Mg(2+).

It belongs to the TRAFAC class TrmE-Era-EngA-EngB-Septin-like GTPase superfamily. EngB GTPase family. Requires Mg(2+) as cofactor.

Its function is as follows. Necessary for normal cell division and for the maintenance of normal septation. The sequence is that of Probable GTP-binding protein EngB from Mycoplasmopsis pulmonis (strain UAB CTIP) (Mycoplasma pulmonis).